The chain runs to 308 residues: Porphobilinogen deaminase (308 aa).

Position 241 is an S-(dipyrrolylmethanemethyl)cysteine (cysteine 241).

This sequence belongs to the HMBS family. As to quaternary structure, monomer. Requires dipyrromethane as cofactor.

It catalyses the reaction 4 porphobilinogen + H2O = hydroxymethylbilane + 4 NH4(+). It participates in porphyrin-containing compound metabolism; protoporphyrin-IX biosynthesis; coproporphyrinogen-III from 5-aminolevulinate: step 2/4. In terms of biological role, tetrapolymerization of the monopyrrole PBG into the hydroxymethylbilane pre-uroporphyrinogen in several discrete steps. This chain is Porphobilinogen deaminase, found in Staphylococcus aureus (strain MSSA476).